The sequence spans 616 residues: MKQSKMLIPTLREMPSDAQVISHALLLRAGYVRQVSAGVYSYLPLANRVIEKAKNIMRQEFEKIGAVEMLAPALLSADLWRESGRYETYGDDLFKLKNREGSDFILGPTHEETFTALVRDSVKSYKQLPLNLYQIQPKYRDEKRPRNGLLRTREFIMKDAYSFHANYDSLDVTYDEYKSAYEKIFTRSEIDFKAIIGDGGAMGGKDSQEFMAITPDRTDLDRWLVLDKSVASLDEIPADVLEAIKAELSNWMVSGEDTIAYSSESSYAANLEMATNEYKPSNRVVAETELVRVETPNCKTIDEVAAFLQVSEEQTIKTLVYIADEKPVVALLVGNDQLNEVKLKNHLGADFFEAATEAEVQELFGANFGSLGPVNLPEEVTIIADRKVQDLSNAVAGANEDGYHLTGVNPGRDFTAEYVDIREVREGEISPDGNGVLKFARGIEIGHIFKLGTRYSDSMNATVLDENGRAVPLVMGCYGIGVSRLLSAVMEQHARLFVNKTPKGEYRYAWGINFPKELAPFDVHLIPVNVKDEESLALTDKIEESLVGAGYEVLVDDRNERVGVKFSDSDLIGLPIRVTVGKKAAEGIVEVKIKASGDTIEVHADNLIETLSILTK.

This sequence belongs to the class-II aminoacyl-tRNA synthetase family. ProS type 1 subfamily. As to quaternary structure, homodimer.

Its subcellular location is the cytoplasm. It carries out the reaction tRNA(Pro) + L-proline + ATP = L-prolyl-tRNA(Pro) + AMP + diphosphate. Functionally, catalyzes the attachment of proline to tRNA(Pro) in a two-step reaction: proline is first activated by ATP to form Pro-AMP and then transferred to the acceptor end of tRNA(Pro). As ProRS can inadvertently accommodate and process non-cognate amino acids such as alanine and cysteine, to avoid such errors it has two additional distinct editing activities against alanine. One activity is designated as 'pretransfer' editing and involves the tRNA(Pro)-independent hydrolysis of activated Ala-AMP. The other activity is designated 'posttransfer' editing and involves deacylation of mischarged Ala-tRNA(Pro). The misacylated Cys-tRNA(Pro) is not edited by ProRS. In Streptococcus gordonii (strain Challis / ATCC 35105 / BCRC 15272 / CH1 / DL1 / V288), this protein is Proline--tRNA ligase.